A 140-amino-acid chain; its full sequence is Cysteine desulfuration protein SufE (140 aa).

The active-site Cysteine persulfide intermediate is the Cys-51.

This sequence belongs to the SufE family. In terms of assembly, homodimer. Interacts with SufS.

The protein resides in the cytoplasm. It participates in cofactor biosynthesis; iron-sulfur cluster biosynthesis. Participates in cysteine desulfuration mediated by SufS. Cysteine desulfuration mobilizes sulfur from L-cysteine to yield L-alanine and constitutes an essential step in sulfur metabolism for biosynthesis of a variety of sulfur-containing biomolecules. Functions as a sulfur acceptor for SufS, by mediating the direct transfer of the sulfur atom from the S-sulfanylcysteine of SufS, an intermediate product of cysteine desulfuration process. This chain is Cysteine desulfuration protein SufE, found in Yersinia pseudotuberculosis serotype O:1b (strain IP 31758).